The primary structure comprises 132 residues: Iron-sulfur cluster assembly 1 homolog, mitochondrial (132 aa).

A mitochondrion-targeting transit peptide spans 1–15 (MASSASSVVRATVRA). Fe cation contacts are provided by Cys60, Cys124, and Cys126.

Belongs to the HesB/IscA family. As to quaternary structure, homooligomer, forming a rod-shaped structure 24 nm in length that may arise through a double-helical assembly of subunits. Interacts with CRY4; CRY4 seems to be associated with the outside of the rod-shaped homooligomer. Does not interact with CRY1 or CRY2. As to expression, detected in retina, especially in the retinal ganglion layer, the inner nuclear layer and the outer nuclear layer. Detected in retina visual pigment cells (at protein level).

Its subcellular location is the mitochondrion. Its function is as follows. Involved in the maturation of mitochondrial 4Fe-4S proteins functioning late in the iron-sulfur cluster assembly pathway. Probably involved in the binding of an intermediate of Fe/S cluster assembly. Component of a putative magnetoreceptor complex formed by ISCA1 and CRY4, a member of the cryptochrome family that are known to be required for light-dependent magnetosensitivity in various orgnisms. The rod-like assembly may facilitate the perception of the Earth's weak magnetic field. Both ISCA1 and the complex with CRY4 have magnetic properties and are attracted to iron beads. When exposed to a magnetic field of 1 mT (superior to the natural magnetic field), over 50% of the rod-like complexes align more or less in parallel with the magnetic field at room temperature. The chain is Iron-sulfur cluster assembly 1 homolog, mitochondrial (ISCA1) from Columba livia (Rock dove).